The following is a 191-amino-acid chain: Small ribosomal subunit protein uS5 (191 aa).

Residues 1–20 (MAAERERGGRERSRDREERD) form a disordered region. The 64-residue stretch at 23 to 86 (FVDKLVHINR…EAAKRNLTRV (64 aa)) folds into the S5 DRBM domain.

Belongs to the universal ribosomal protein uS5 family. Part of the 30S ribosomal subunit. Contacts proteins S4 and S8.

Functionally, with S4 and S12 plays an important role in translational accuracy. Its function is as follows. Located at the back of the 30S subunit body where it stabilizes the conformation of the head with respect to the body. This is Small ribosomal subunit protein uS5 from Rhodopseudomonas palustris (strain HaA2).